The primary structure comprises 428 residues: Phosphomethylpyrimidine synthase 1 (428 aa).

Substrate contacts are provided by residues M94, Y123, H162, 184-186, 225-228, and E264; these read SRG and NGMR. Zn(2+) is bound at residue H268. A substrate-binding site is contributed by Y291. Zn(2+) is bound at residue H332. [4Fe-4S] cluster contacts are provided by C408, C411, and C415.

It belongs to the ThiC family. [4Fe-4S] cluster serves as cofactor.

The enzyme catalyses 5-amino-1-(5-phospho-beta-D-ribosyl)imidazole + S-adenosyl-L-methionine = 4-amino-2-methyl-5-(phosphooxymethyl)pyrimidine + CO + 5'-deoxyadenosine + formate + L-methionine + 3 H(+). The protein operates within cofactor biosynthesis; thiamine diphosphate biosynthesis. Catalyzes the synthesis of the hydroxymethylpyrimidine phosphate (HMP-P) moiety of thiamine from aminoimidazole ribotide (AIR) in a radical S-adenosyl-L-methionine (SAM)-dependent reaction. The sequence is that of Phosphomethylpyrimidine synthase 1 from Methanosarcina barkeri (strain Fusaro / DSM 804).